A 301-amino-acid polypeptide reads, in one-letter code: Protein FdhE homolog (301 aa).

It belongs to the FdhE family.

Its subcellular location is the cytoplasm. Necessary for formate dehydrogenase activity. The sequence is that of Protein FdhE homolog from Shewanella baltica (strain OS185).